Here is a 334-residue protein sequence, read N- to C-terminus: N-acetyl-gamma-glutamyl-phosphate reductase (334 aa).

The active site involves Cys154.

This sequence belongs to the NAGSA dehydrogenase family. Type 1 subfamily.

The protein resides in the cytoplasm. It carries out the reaction N-acetyl-L-glutamate 5-semialdehyde + phosphate + NADP(+) = N-acetyl-L-glutamyl 5-phosphate + NADPH + H(+). It participates in amino-acid biosynthesis; L-arginine biosynthesis; N(2)-acetyl-L-ornithine from L-glutamate: step 3/4. In terms of biological role, catalyzes the NADPH-dependent reduction of N-acetyl-5-glutamyl phosphate to yield N-acetyl-L-glutamate 5-semialdehyde. The protein is N-acetyl-gamma-glutamyl-phosphate reductase of Escherichia coli O6:H1 (strain CFT073 / ATCC 700928 / UPEC).